Reading from the N-terminus, the 463-residue chain is Argininosuccinate lyase (463 aa).

This sequence belongs to the lyase 1 family. Argininosuccinate lyase subfamily.

It localises to the cytoplasm. It carries out the reaction 2-(N(omega)-L-arginino)succinate = fumarate + L-arginine. Its pathway is amino-acid biosynthesis; L-arginine biosynthesis; L-arginine from L-ornithine and carbamoyl phosphate: step 3/3. This is Argininosuccinate lyase from Streptococcus pneumoniae serotype 2 (strain D39 / NCTC 7466).